The primary structure comprises 415 residues: Serine hydroxymethyltransferase (415 aa).

Residues Leu117 and 121–123 (GHL) each bind (6S)-5,6,7,8-tetrahydrofolate. Position 225 is an N6-(pyridoxal phosphate)lysine (Lys225). Residues Glu241 and 349-351 (SPF) each bind (6S)-5,6,7,8-tetrahydrofolate.

The protein belongs to the SHMT family. In terms of assembly, homodimer. It depends on pyridoxal 5'-phosphate as a cofactor.

It is found in the cytoplasm. The enzyme catalyses (6R)-5,10-methylene-5,6,7,8-tetrahydrofolate + glycine + H2O = (6S)-5,6,7,8-tetrahydrofolate + L-serine. It participates in one-carbon metabolism; tetrahydrofolate interconversion. Its pathway is amino-acid biosynthesis; glycine biosynthesis; glycine from L-serine: step 1/1. Functionally, catalyzes the reversible interconversion of serine and glycine with tetrahydrofolate (THF) serving as the one-carbon carrier. This reaction serves as the major source of one-carbon groups required for the biosynthesis of purines, thymidylate, methionine, and other important biomolecules. Also exhibits THF-independent aldolase activity toward beta-hydroxyamino acids, producing glycine and aldehydes, via a retro-aldol mechanism. The sequence is that of Serine hydroxymethyltransferase from Campylobacter hominis (strain ATCC BAA-381 / DSM 21671 / CCUG 45161 / LMG 19568 / NCTC 13146 / CH001A).